A 2564-amino-acid polypeptide reads, in one-letter code: Histone-lysine N-methyltransferase SETD2 (2564 aa).

Residues 1 to 11 (MKQLQPQPPPK) are compositionally biased toward pro residues. The interval 1-30 (MKQLQPQPPPKMGDFYDPEHPTPEEEENEA) is disordered. A compositionally biased stretch (basic and acidic residues) spans 17–30 (DPEHPTPEEEENEA). Position 131 is a phosphoserine (serine 131). Disordered stretches follow at residues 180–211 (STTV…VTEP), 272–561 (NEQA…TLSK), and 607–626 (PERE…DSPT). Pro residues predominate over residues 187–197 (PSSPPPPPPPA). Residues 198 to 207 (QATTLSSPAP) show a composition bias toward low complexity. A compositionally biased stretch (basic and acidic residues) spans 278–290 (SSKKEDSHIGKDE). Residues serine 321, serine 323, and serine 344 each carry the phosphoserine modification. Composition is skewed to basic and acidic residues over residues 335-400 (RSHD…ERER), 421-432 (RSERSHYYDSDR), 439-467 (PYRE…EYKK), and 479-528 (SYRD…EAIK). Lysine 359 is covalently cross-linked (Glycyl lysine isopeptide (Lys-Gly) (interchain with G-Cter in SUMO2)). Serine 422 carries the post-translational modification Phosphoserine. Serine 532, serine 614, and serine 624 each carry phosphoserine. A compositionally biased stretch (polar residues) spans 616–625 (APSNRLNDSP). Position 626 is a phosphothreonine (threonine 626). A Glycyl lysine isopeptide (Lys-Gly) (interchain with G-Cter in SUMO2) cross-link involves residue lysine 637. Phosphoserine occurs at positions 698, 708, 744, and 754. Lysine 776 participates in a covalent cross-link: Glycyl lysine isopeptide (Lys-Gly) (interchain with G-Cter in SUMO2). Disordered regions lie at residues 964–995 (EEGN…TSDD), 1036–1101 (EDYS…SDHW), 1133–1233 (LHKG…LGKT), 1264–1352 (QEKP…FSDQ), and 1393–1443 (LEKN…PGSA). The segment covering 971 to 994 (PERRGRPEISLDERGEGGHVHTSD) has biased composition (basic and acidic residues). Acidic residues predominate over residues 1045–1058 (SNDESDSEDTDSDD). Residues 1084 to 1095 (SPCSSRSSQSYR) are compositionally biased toward low complexity. Serine 1098 carries the post-translational modification Phosphoserine. Residues 1162–1171 (HPQSDGVDST) are compositionally biased toward polar residues. Basic and acidic residues predominate over residues 1172-1191 (SHTDVKSDPLGHPNSEETVK). Residues 1215–1225 (KSWQQTTFQNR) are compositionally biased toward polar residues. Serine 1228 is subject to Phosphoserine. Over residues 1265-1276 (EKPSTTYQQPDS) the composition is skewed to polar residues. The segment covering 1393 to 1403 (LEKNDIKDRGP) has biased composition (basic and acidic residues). Phosphoserine occurs at positions 1413, 1415, and 1417. The segment at 1418–1714 (DGELQDRKKV…KKERSRKKDS (297 aa)) is interaction with TUBA1A. Basic and acidic residues predominate over residues 1421–1431 (LQDRKKVRVEV). The AWS domain occupies 1494-1548 (IKRMQCECTPLSKDERAQGEIACGEDCLNRLLMIECSSRCPNGDYCSNRRFQRKQ). Zn(2+) contacts are provided by cysteine 1499, cysteine 1501, cysteine 1516, cysteine 1520, cysteine 1529, cysteine 1533, and cysteine 1539. The 118-residue stretch at 1550–1667 (ADVEVILTEK…SGSELTFDYQ (118 aa)) folds into the SET domain. Residues 1560 to 1562 (KGW), 1603 to 1605 (HYY), and 1628 to 1629 (NH) contribute to the S-adenosyl-L-methionine site. Cysteine 1631 lines the Zn(2+) pocket. Positions 1674–1690 (EAQKCFCGSANCRGYLG) constitute a Post-SET domain. Residue glutamine 1676 coordinates S-adenosyl-L-methionine. A Zn(2+)-binding site is contributed by cysteine 1678. Residue phenylalanine 1679 participates in S-adenosyl-L-methionine binding. 2 residues coordinate Zn(2+): cysteine 1680 and cysteine 1685. 3 positions are modified to phosphoserine: serine 1696, serine 1844, and serine 1845. Residues 1831-1872 (KTAVPPLSEGDGYSSENTSRAHTPLNTPDPSTKLSTEADTDT) form a disordered region. Polar residues predominate over residues 1844-1867 (SSENTSRAHTPLNTPDPSTKLSTE). 2 positions are modified to phosphothreonine: threonine 1853 and threonine 1872. Phosphoserine is present on serine 1888. The tract at residues 1921 to 2142 (EELQSQQLLP…EAQKQQQQMQ (222 aa)) is disordered. The span at 1924 to 1935 (QSQQLLPQQLPE) shows a compositional bias: low complexity. At serine 1952 the chain carries Phosphoserine. Residues 1960-1972 (IEPKESNGTKLEE) show a composition bias toward basic and acidic residues. Positions 1973-1990 (PINEETPSQDEEEGVSDV) are enriched in acidic residues. A phosphoserine mark is found at serine 1980, serine 1988, and serine 1995. Basic and acidic residues-rich tracts occupy residues 1991–2004 (ESER…KTVD), 2014–2046 (DSWK…DAVG), and 2059–2072 (RSRE…TQNK). Phosphoserine is present on residues serine 2080 and serine 2082. Composition is skewed to basic and acidic residues over residues 2090-2100 (RGTKRPDDRYD) and 2111-2135 (KDRN…REAQ). Positions 2117–2146 (STEERRKLFEQEVAQREAQKQQQQMQNLGM) form a coiled coil. Residues 2137–2366 (QQQQMQNLGM…APGQPQPLQP (230 aa)) are low charge region. A WW domain is found at 2389–2422 (IVLPPNWKTARDPEGKIYYYHVITRQTQWDPPTW). A disordered region spans residues 2439-2465 (LGTPTYDENPMKASKKPKTAEADTSSE). The tract at residues 2457-2564 (TAEADTSSEL…YKPKEDTELE (108 aa)) is interaction with POLR2A.

It belongs to the class V-like SAM-binding methyltransferase superfamily. Histone-lysine methyltransferase family. SET2 subfamily. Specifically interacts with hyperphosphorylated C-terminal domain (CTD) of RNA polymerase II large subunit (POLR2A): binds to CTD heptad repeats doubly phosphorylated on 'Ser-2' and 'Ser-5' of each heptad. Interacts with HTT. Interacts with IWS1. Interacts with p53/TP53; leading to regulate p53/TP53 target genes. Component of a complex with HNRNPL. Interacts with TUBA1A; the interaction is independent on alpha-tubulin acetylation on 'Lys-40'. Interacts with STAT1. In terms of processing, may be automethylated. In terms of tissue distribution, ubiquitously expressed.

It is found in the nucleus. The protein localises to the chromosome. It carries out the reaction L-lysyl(36)-[histone H3] + 3 S-adenosyl-L-methionine = N(6),N(6),N(6)-trimethyl-L-lysyl(36)-[histone H3] + 3 S-adenosyl-L-homocysteine + 3 H(+). The enzyme catalyses L-lysyl-[protein] + S-adenosyl-L-methionine = N(6)-methyl-L-lysyl-[protein] + S-adenosyl-L-homocysteine + H(+). It catalyses the reaction L-lysyl-[protein] + 3 S-adenosyl-L-methionine = N(6),N(6),N(6)-trimethyl-L-lysyl-[protein] + 3 S-adenosyl-L-homocysteine + 3 H(+). Its activity is regulated as follows. Specifically inhibited by sinefungin derivatives. N-propyl sinefungin (Pr-SNF) interacts preferentially with SETD2. In terms of biological role, histone methyltransferase that specifically trimethylates 'Lys-36' of histone H3 (H3K36me3) using dimethylated 'Lys-36' (H3K36me2) as substrate. It is capable of trimethylating unmethylated H3K36 (H3K36me0) in vitro. Represents the main enzyme generating H3K36me3, a specific tag for epigenetic transcriptional activation. Plays a role in chromatin structure modulation during elongation by coordinating recruitment of the FACT complex and by interacting with hyperphosphorylated POLR2A. Acts as a key regulator of DNA mismatch repair in G1 and early S phase by generating H3K36me3, a mark required to recruit MSH6 subunit of the MutS alpha complex: early recruitment of the MutS alpha complex to chromatin to be replicated allows a quick identification of mismatch DNA to initiate the mismatch repair reaction. Required for DNA double-strand break repair in response to DNA damage: acts by mediating formation of H3K36me3, promoting recruitment of RAD51 and DNA repair via homologous recombination (HR). Acts as a tumor suppressor. H3K36me3 also plays an essential role in the maintenance of a heterochromatic state, by recruiting DNA methyltransferase DNMT3A. H3K36me3 is also enhanced in intron-containing genes, suggesting that SETD2 recruitment is enhanced by splicing and that splicing is coupled to recruitment of elongating RNA polymerase. Required during angiogenesis. Required for endoderm development by promoting embryonic stem cell differentiation toward endoderm: acts by mediating formation of H3K36me3 in distal promoter regions of FGFR3, leading to regulate transcription initiation of FGFR3. In addition to histones, also mediates methylation of other proteins, such as tubulins and STAT1. Trimethylates 'Lys-40' of alpha-tubulins such as TUBA1B (alpha-TubK40me3); alpha-TubK40me3 is required for normal mitosis and cytokinesis and may be a specific tag in cytoskeletal remodeling. Involved in interferon-alpha-induced antiviral defense by mediating both monomethylation of STAT1 at 'Lys-525' and catalyzing H3K36me3 on promoters of some interferon-stimulated genes (ISGs) to activate gene transcription. Its function is as follows. (Microbial infection) Recruited to the promoters of adenovirus 12 E1A gene in case of infection, possibly leading to regulate its expression. This Homo sapiens (Human) protein is Histone-lysine N-methyltransferase SETD2 (SETD2).